The primary structure comprises 96 residues: Secretoglobin family 2B member 2 (96 aa).

Residues 1–23 form the signal peptide; the sequence is MRVTSATCALLLALICSVQLGDA.

The protein belongs to the secretoglobin family.

The protein localises to the secreted. The protein is Secretoglobin family 2B member 2 (SCGB2B2) of Homo sapiens (Human).